We begin with the raw amino-acid sequence, 281 residues long: Pre T-cell antigen receptor alpha (281 aa).

Positions 1-23 (MAGTWLLLLLALGCPALPTGVGG) are cleaved as a signal peptide. Residues 24 to 146 (TPFPSLAPPI…QEPLRGTPGG (123 aa)) lie on the Extracellular side of the membrane. The cysteines at positions 47 and 107 are disulfide-linked. Asparagine 67 is a glycosylation site (N-linked (GlcNAc...) asparagine). Residues 147-167 (ALWLGVLRLLLFKLLLFDLLL) form a helical membrane-spanning segment. Residues 168–281 (TCSCLCDPAG…LPPPLQAGAA (114 aa)) lie on the Cytoplasmic side of the membrane. Residues 196–233 (LHPATETGGREATSSPRPQPRDRRWGDTPPGRKPGSPV) are disordered.

As to quaternary structure, heterodimer with TCRB; disulfide linked. This heterodimer assembles with CD3 proteins into a signaling-competent pre-T-cell receptor complex. Interacts with RHBDD1. As to expression, expressed in immature but not mature T-cells. Also found in CD34+ cells from peripheral blood, CD34+ precursors from umbilical cord blood and adult bone marrow.

The protein localises to the membrane. It localises to the cell membrane. Functionally, component of the pre-T-cell receptor complex (composed of PTCRA, TCRB and the CD3 complex) that has a crucial role in early T-cell development, particularly alpha-beta T cell differentiation. This Homo sapiens (Human) protein is Pre T-cell antigen receptor alpha.